A 163-amino-acid polypeptide reads, in one-letter code: Calcium-binding protein 2 (163 aa).

A lipid anchor (N-myristoyl glycine) is attached at G2. EF-hand domains follow at residues E21–M56, G72–A89, I95–E130, and L132–R163. 5 residues coordinate Ca(2+): D34, D36, D38, Y40, and E45. Ca(2+) is bound by residues D108, N110, D112, C114, E119, D145, N147, D149, and E156.

Its subcellular location is the cytoplasm. It is found in the perinuclear region. It localises to the cell membrane. The protein resides in the golgi apparatus. Required for sound encoding at inner hair cells (IHCs) synapses, likely via inhibition of the inactivation of voltage-gated calcium channel of type 1.3 (Cav1.3) in the IHCs. Required for the normal transfer of light signals through the retina. In Bos taurus (Bovine), this protein is Calcium-binding protein 2 (CABP2).